The chain runs to 510 residues: uncharacterized protein (510 aa).

12 helical membrane-spanning segments follow: residues Leu-17–Leu-37, Leu-56–Trp-76, Val-111–Leu-131, Ile-148–Ile-168, Leu-180–Gly-200, Leu-223–Ile-243, Phe-261–Ile-281, Tyr-300–Met-320, Ile-355–Ile-375, Leu-382–Tyr-402, Ala-434–Ile-454, and Leu-472–Val-492.

This sequence to A.aeolicus AQ_155.

Its subcellular location is the cell membrane. This is an uncharacterized protein from Rickettsia prowazekii (strain Madrid E).